The primary structure comprises 202 residues: Transmembrane 4 L6 family member 4 (202 aa).

Over 1–9 the chain is Cytoplasmic; sequence MCTGGCARC. A helical membrane pass occupies residues 10-30; it reads LGGTLIPLAFFGFLANILLFF. Residues 31–45 are Extracellular-facing; that stretch reads PGGKVIDDNDHLSQE. A helical transmembrane segment spans residues 46–66; the sequence is IWFFGGILGSGVLMIFPALVF. Over 67-93 the chain is Cytoplasmic; sequence LGLKNNDCCGCCGNEGCGKRFAMFTST. The helical transmembrane segment at 94 to 114 threads the bilayer; it reads IFAVVGFLGAGYSFIISAISI. Over 115 to 158 the chain is Extracellular; the sequence is NKGPKCLMANSTWGYPFHDGDYLNDEALWNKCREPLNVVPWNLT. 2 N-linked (GlcNAc...) asparagine glycosylation sites follow: Asn124 and Asn156. The helical transmembrane segment at 159 to 179 threads the bilayer; it reads LFSILLVVGGIQMVLCAIQVV. The Cytoplasmic segment spans residues 180-202; sequence NGLLGTLCGDCQCCGCCGGDGPV.

This sequence belongs to the L6 tetraspanin family. In terms of processing, N-glycosylated. Glycosylation is required for the growth inhibitory effect. In terms of tissue distribution, jejunum and liver.

It is found in the membrane. In terms of biological role, regulates the adhesive and proliferative status of intestinal epithelial cells. Can mediate density-dependent cell proliferation. This is Transmembrane 4 L6 family member 4 (TM4SF4) from Homo sapiens (Human).